We begin with the raw amino-acid sequence, 349 residues long: Micronemal protein 6 (349 aa).

The signal sequence occupies residues 1–23 (MRLFRCCAAAVVAAESLLWLKNG). 3 consecutive EGF-like domains span residues 36–80 (IADN…VTCM), 96–134 (TPAA…SLDG), and 147–192 (GCEE…ITCK). 9 cysteine pairs are disulfide-bonded: Cys40–Cys53, Cys45–Cys62, Cys64–Cys79, Cys100–Cys113, Cys105–Cys122, Cys124–Cys140, Cys148–Cys162, Cys153–Cys173, and Cys175–Cys191. The segment at 194–291 (VPPHYRKPPF…EEGSGHAGAI (98 aa)) is disordered. An acidic domain region spans residues 204–283 (EFGKGGHPVD…SEEQGKEREE (80 aa)). Composition is skewed to basic and acidic residues over residues 210 to 247 (HPVD…RTPL) and 276 to 285 (EQGKEREEGS). A helical membrane pass occupies residues 290 to 310 (AIAGGVIGGLLLLSAAGAGVA).

In terms of assembly, interacts directly with MIC1. Part of the MIC6-MIC1-MIC4 complex. In terms of processing, subject to proteolytic processing involving both the N-terminus and the C-terminus. The first EGF-like domain (EGF-like domain 1) is removed by proteolytic cleavage by ASP3 and is not present in the mature protein. Released as soluble 35 kDa protein after proteolytic processing at the C-terminus.

It is found in the cytoplasmic vesicle. The protein resides in the secretory vesicle. Its subcellular location is the microneme membrane. The protein localises to the secreted. Functionally, escorter protein required for import of MIC1 and MIC4 adhesins into the microneme. The chain is Micronemal protein 6 from Toxoplasma gondii.